An 880-amino-acid polypeptide reads, in one-letter code: Endoglucanase E-4 (880 aa).

The N-terminal stretch at 1–46 (MSVTEPPPRRRGRHSRARRFLTSLGATAALTAGMLGVPLATGTAHA) is a signal peptide. The active-site Nucleophile is the Asp104. Catalysis depends on residues His422, His427, Asp461, and Glu470. The region spanning 504 to 652 (PDGPEIFVEA…GVPVWGTAPE (149 aa)) is the CBM3 domain. Residues 647 to 688 (WGTAPEEGEEPGGGEGPGGGEEPGEDVTPPSAPGSPAVRDVT) form a disordered region. The 93-residue stretch at 678 to 770 (APGSPAVRDV…TVSFTTLAEN (93 aa)) folds into the Fibronectin type-III domain. Residues 771 to 880 (GGGPDASCTV…TLNGEPCALA (110 aa)) enclose the CBM2 domain.

Belongs to the glycosyl hydrolase 9 (cellulase E) family.

The catalysed reaction is Endohydrolysis of (1-&gt;4)-beta-D-glucosidic linkages in cellulose, lichenin and cereal beta-D-glucans.. Its pathway is glycan metabolism; cellulose degradation. This is Endoglucanase E-4 (celD) from Thermobifida fusca (Thermomonospora fusca).